Consider the following 280-residue polypeptide: Acyl-[acyl-carrier-protein]--UDP-N-acetylglucosamine O-acyltransferase (280 aa).

It belongs to the transferase hexapeptide repeat family. LpxA subfamily. In terms of assembly, homotrimer.

It localises to the cytoplasm. The enzyme catalyses a (3R)-hydroxyacyl-[ACP] + UDP-N-acetyl-alpha-D-glucosamine = a UDP-3-O-[(3R)-3-hydroxyacyl]-N-acetyl-alpha-D-glucosamine + holo-[ACP]. Its pathway is glycolipid biosynthesis; lipid IV(A) biosynthesis; lipid IV(A) from (3R)-3-hydroxytetradecanoyl-[acyl-carrier-protein] and UDP-N-acetyl-alpha-D-glucosamine: step 1/6. Involved in the biosynthesis of lipid A, a phosphorylated glycolipid that anchors the lipopolysaccharide to the outer membrane of the cell. The protein is Acyl-[acyl-carrier-protein]--UDP-N-acetylglucosamine O-acyltransferase of Chlamydia muridarum (strain MoPn / Nigg).